A 564-amino-acid chain; its full sequence is Isocitrate dehydrogenase kinase/phosphatase (564 aa).

ATP-binding positions include 315 to 321 (APGVKGM) and K336. D371 is a catalytic residue.

It belongs to the AceK family.

The protein resides in the cytoplasm. The enzyme catalyses L-seryl-[isocitrate dehydrogenase] + ATP = O-phospho-L-seryl-[isocitrate dehydrogenase] + ADP + H(+). In terms of biological role, bifunctional enzyme which can phosphorylate or dephosphorylate isocitrate dehydrogenase (IDH) on a specific serine residue. This is a regulatory mechanism which enables bacteria to bypass the Krebs cycle via the glyoxylate shunt in response to the source of carbon. When bacteria are grown on glucose, IDH is fully active and unphosphorylated, but when grown on acetate or ethanol, the activity of IDH declines drastically concomitant with its phosphorylation. This chain is Isocitrate dehydrogenase kinase/phosphatase, found in Idiomarina loihiensis (strain ATCC BAA-735 / DSM 15497 / L2-TR).